The following is a 72-amino-acid chain: Large ribosomal subunit protein bL31c (72 aa).

Belongs to the bacterial ribosomal protein bL31 family. Type A subfamily. As to quaternary structure, part of the 50S ribosomal subunit.

It localises to the plastid. The protein localises to the chloroplast. Binds the 23S rRNA. This Guillardia theta (Cryptophyte) protein is Large ribosomal subunit protein bL31c.